Consider the following 384-residue polypeptide: AIAAVTTFLILFTVFGNALVILAVLTSRSLRAPQNLFLVSLAAADILVATLIXPFSLANELLGYWYFWHTWCEVYLALXVLXCTSSIVHLCAISLDRYWAVSRALEYNSKRTPRRIXGIILTVWLIAAAISLPPLIYKGDQGPQPHGRPQCRLNQEAWYILSSSIGSFFAPCLIMILVYLRIYLIAKRRNRRGPRAQGASKGGASKQPHPLAGGASTKPPTLTSSLAVAGEVNGHSKPTGQEGKTPEDLGVVTLPPNWPALPNSGQGQKEGVCGISPEXAEEEEEGGPEALPASPASXGSPQLQQPQGTRVLVTLRGQVVLSRGLGAASGQWWRRRTQLTREKRFTFVLAVVIGVXVLCWFPFFXSYSLGAICPQHCTVXHGLF.

The helical transmembrane segment at 1-25 threads the bilayer; sequence AIAAVTTFLILFTVFGNALVILAVL. The Cytoplasmic segment spans residues 26-36; it reads TSRSLRAPQNL. The helical transmembrane segment at 37 to 62 threads the bilayer; it reads FLVSLAAADILVATLIXPFSLANELL. Residues 63 to 72 are Extracellular-facing; the sequence is GYWYFWHTWC. C72 and C151 are oxidised to a cystine. The helical transmembrane segment at 73 to 95 threads the bilayer; it reads EVYLALXVLXCTSSIVHLCAISL. Residues 96–117 lie on the Cytoplasmic side of the membrane; the sequence is DRYWAVSRALEYNSKRTPRRIX. The chain crosses the membrane as a helical span at residues 118 to 140; sequence GIILTVWLIAAAISLPPLIYKGD. The Extracellular portion of the chain corresponds to 141-156; it reads QGPQPHGRPQCRLNQE. The chain crosses the membrane as a helical span at residues 157-180; that stretch reads AWYILSSSIGSFFAPCLIMILVYL. The Cytoplasmic segment spans residues 181-348; sequence RIYLIAKRRN…LTREKRFTFV (168 aa). Residues 193-306 form a disordered region; that stretch reads GPRAQGASKG…SXGSPQLQQP (114 aa). The span at 288-306 shows a compositional bias: low complexity; sequence PEALPASPASXGSPQLQQP. Residues 349–372 form a helical membrane-spanning segment; the sequence is LAVVIGVXVLCWFPFFXSYSLGAI. At 373 to 381 the chain is on the extracellular side; that stretch reads CPQHCTVXH. Residues 382 to 384 form a helical membrane-spanning segment; the sequence is GLF.

It belongs to the G-protein coupled receptor 1 family. Adrenergic receptor subfamily. ADRA2B sub-subfamily. Interacts with RAB26. Interacts with PPP1R9B. Interacts with GGA1, GGA2 and GGA3.

The protein resides in the cell membrane. Functionally, alpha-2 adrenergic receptors mediate the catecholamine-induced inhibition of adenylate cyclase through the action of G proteins. The sequence is that of Alpha-2B adrenergic receptor (ADRA2B) from Echinops telfairi (Lesser hedgehog tenrec).